A 944-amino-acid chain; its full sequence is E3 ubiquitin-protein ligase JMJ24 (944 aa).

Disordered regions lie at residues 20-40 and 77-103; these read QTRSANGIGNGNGESIPGIPD and ANSAFRANQKKAKRRSSLGETDTYSEG. The region spanning 38-83 is the WRC domain; it reads IPDDLRCKRSDGKQWRCTAMSMADKTVCEKHYIQAKKRAANSAFRA. The Nuclear localization signal 1 motif lies at 73–80; sequence KKRAANSA. Residues 217-269 form a PHD-type; atypical zinc finger; that stretch reads GEICHQCQRKDRERIISCLKCNQRAFCHNCLSARYSEISLEEVEKVCPACRGL. Residues cysteine 220, cysteine 223, cysteine 234, cysteine 237, cysteine 243, cysteine 246, cysteine 263, and cysteine 266 each coordinate Zn(2+). The short motif at 323–330 is the Nuclear localization signal 2 element; the sequence is EKRLREVE. In terms of domain architecture, JmjC spans 621 to 873; that stretch reads PRLGLLNVAA…ESARLAEEIR (253 aa). The span at 685 to 703 shows a compositional bias: basic and acidic residues; the sequence is ERVRKTKPVPEEPDQKMSE. Residues 685–715 are disordered; it reads ERVRKTKPVPEEPDQKMSENESLLSPEQKLR.

Belongs to the JARID1 histone demethylase family. In terms of assembly, homodimer. Interacts with RDR2. Binds to CMT3. Associates with the E2 ubiquitin-conjugating enzyme UBC10. Self-ubiquitinates. Expressed in inflorescences, flowers, roots, siliques, leaves and stems, especially in the vasculature (mainly phloem), with highest levels in floral organs.

It localises to the nucleus. The catalysed reaction is S-ubiquitinyl-[E2 ubiquitin-conjugating enzyme]-L-cysteine + [acceptor protein]-L-lysine = [E2 ubiquitin-conjugating enzyme]-L-cysteine + N(6)-ubiquitinyl-[acceptor protein]-L-lysine.. Binds histone H3 but seems to have lost demethylase activity probably due to its inability to bind iron Fe(2+). Possesses E3 ubiquitin ligase activity and targets directly CMT3 for proteasomal degradation to initiate destabilization of the heterochromatic state (e.g. CHG cytosine methylation and H3K9me2) of endogenous silenced loci. Required for the removal of repressive H3K9me2 histone marks to facilitate the transcription of AtSN1, AtMu1c, solo LTR and SDC, thus counteracting their transcriptional silencing. Mainly required to promote the basal level transcription of silenced loci such as TE and repeats targeted by RNA-dependent DNA methylation (RdDM) for silencing, a specialized branch of the RNA interference (RNAi) pathway. Also cooperates with RNAi pathways for gene silencing both by contributing to the production of 24-nt siRNA to initiate RdDM and by recruiting RDR2 to enable local transcripts to make dsRNA. Antagonizes histone H3K9 demethylase IBM1/JMJ25 function. The chain is E3 ubiquitin-protein ligase JMJ24 from Arabidopsis thaliana (Mouse-ear cress).